Consider the following 143-residue polypeptide: Glutamyl-tRNA(Gln) amidotransferase subunit C, chloroplastic/mitochondrial (143 aa).

The protein belongs to the GatC family. As to quaternary structure, subunit of the heterotrimeric GatCAB amidotransferase (AdT) complex, composed of A, B and C subunits.

Its subcellular location is the mitochondrion. The protein localises to the plastid. The protein resides in the chloroplast. It catalyses the reaction L-glutamyl-tRNA(Gln) + L-glutamine + ATP + H2O = L-glutaminyl-tRNA(Gln) + L-glutamate + ADP + phosphate + H(+). In terms of biological role, allows the formation of correctly charged Gln-tRNA(Gln) through the transamidation of misacylated Glu-tRNA(Gln) in chloroplasts and mitochondria. The reaction takes place in the presence of glutamine and ATP through an activated gamma-phospho-Glu-tRNA(Gln). The polypeptide is Glutamyl-tRNA(Gln) amidotransferase subunit C, chloroplastic/mitochondrial (Ricinus communis (Castor bean)).